We begin with the raw amino-acid sequence, 360 residues long: Phenylalanine--tRNA ligase alpha subunit (360 aa).

Residue glutamate 260 participates in Mg(2+) binding.

The protein belongs to the class-II aminoacyl-tRNA synthetase family. Phe-tRNA synthetase alpha subunit type 1 subfamily. In terms of assembly, tetramer of two alpha and two beta subunits. Mg(2+) is required as a cofactor.

Its subcellular location is the cytoplasm. The catalysed reaction is tRNA(Phe) + L-phenylalanine + ATP = L-phenylalanyl-tRNA(Phe) + AMP + diphosphate + H(+). The polypeptide is Phenylalanine--tRNA ligase alpha subunit (Rhizobium rhizogenes (strain K84 / ATCC BAA-868) (Agrobacterium radiobacter)).